An 86-amino-acid polypeptide reads, in one-letter code: Neurotoxin LmNaTx34.1 (86 aa).

The N-terminal stretch at 1–18 (MKTVILVVIALMVIEVQG) is a signal peptide. One can recognise an LCN-type CS-alpha/beta domain in the interval 19–85 (DGYLMVRAGI…IWTYEKNTCS (67 aa)). 4 cysteine pairs are disulfide-bonded: Cys32-Cys84, Cys36-Cys57, Cys43-Cys64, and Cys47-Cys66.

Belongs to the long (4 C-C) scorpion toxin superfamily. Sodium channel inhibitor family. Beta subfamily. Expressed by the venom gland.

The protein localises to the secreted. Functionally, binds voltage-independently at site-4 of sodium channels (Nav) and shift the voltage of activation toward more negative potentials thereby affecting sodium channel activation and promoting spontaneous and repetitive firing. The sequence is that of Neurotoxin LmNaTx34.1 from Lychas mucronatus (Chinese swimming scorpion).